The chain runs to 282 residues: uncharacterized protein (282 aa).

One can recognise an HTH rpiR-type domain in the interval 2 to 78 (TDVLAVIREM…IKIAVSLAKQ (77 aa)). Positions 38–57 (VNELANACDTSEASIIRFCR) form a DNA-binding region, H-T-H motif. The region spanning 122 to 262 (AAEALANANK…FILVAQKKYN (141 aa)) is the SIS domain.

This is an uncharacterized protein from Caldanaerobacter subterraneus subsp. tengcongensis (strain DSM 15242 / JCM 11007 / NBRC 100824 / MB4) (Thermoanaerobacter tengcongensis).